Here is a 313-residue protein sequence, read N- to C-terminus: 2-oxoglutarate-dependent dioxygenase eupC (313 aa).

One can recognise a Fe2OG dioxygenase domain in the interval 187-284; that stretch reads PSIPMRFLHY…LNAKALDGSG (98 aa). Fe cation contacts are provided by His-212, Asp-214, and His-263. Lys-274 provides a ligand contact to 2-oxoglutarate.

Belongs to the iron/ascorbate-dependent oxidoreductase family. The cofactor is Fe(2+).

The protein operates within secondary metabolite biosynthesis; terpenoid biosynthesis. Its function is as follows. 2-oxoglutarate-dependent dioxygenase; part of the gene cluster that mediates the biosynthesis of eupenifeldin, a bistropolone meroterpenoid that acts as an antitumor agent. The first step of eupenifeldin biosynthesis is the biosynthesis of 3-methylorcinaldehyde performed by the non-reducing polyketide synthase eupA. Oxidative dearomatization of 3-methylorcinaldehyde likely catalyzed by the FAD-dependent monooxygenase eupB is followed by oxidative ring expansion by the 2-oxoglutarate-dependent dioxygenase eupC to provide the first tropolone metabolite, tropolone stipitaldehyde. In parallel, generation of sesquiterpene alpha-humulene from farnesylpyrophosphate (FPP) is catalyzed by the terpene cyclase eupE. The cytochrome P450 monooxygenase eupD then hydroxylates humulene to humulenol. The putative Diels-Alderase eupF probably catalyzes the formation of the tropolone-humulene skeleton by linking humulenol and the polyketide moiety. The short-chain dehydrogenase/reductase eupG and the flavin-dependent monooxygenase eupH are also essential for eupenifeldin biosynthesis and are likely the additional decorating enzymes of the tropolone-humulene skeleton to produce final eupenifeldin or derivatives. In Phoma sp, this protein is 2-oxoglutarate-dependent dioxygenase eupC.